Consider the following 119-residue polypeptide: Hydrogenase maturation factor HypA (119 aa).

His-2 serves as a coordination point for Ni(2+). 4 residues coordinate Zn(2+): Cys-73, Cys-76, Cys-89, and Cys-92.

It belongs to the HypA/HybF family.

Functionally, involved in the maturation of [NiFe] hydrogenases. Required for nickel insertion into the metal center of the hydrogenase. The protein is Hydrogenase maturation factor HypA of Cupriavidus necator (strain ATCC 17699 / DSM 428 / KCTC 22496 / NCIMB 10442 / H16 / Stanier 337) (Ralstonia eutropha).